Reading from the N-terminus, the 144-residue chain is Large ribosomal subunit protein uL11 (144 aa).

This sequence belongs to the universal ribosomal protein uL11 family. As to quaternary structure, part of the ribosomal stalk of the 50S ribosomal subunit. Interacts with L10 and the large rRNA to form the base of the stalk. L10 forms an elongated spine to which L12 dimers bind in a sequential fashion forming a multimeric L10(L12)X complex. One or more lysine residues are methylated.

In terms of biological role, forms part of the ribosomal stalk which helps the ribosome interact with GTP-bound translation factors. This chain is Large ribosomal subunit protein uL11, found in Streptomyces coelicolor (strain ATCC BAA-471 / A3(2) / M145).